Here is a 236-residue protein sequence, read N- to C-terminus: Bacterial rhodopsin CSR3 (236 aa).

Over 1–3 (MDA) the chain is Extracellular. Residues 4-25 (VAVVYGITAAGFAVGVAIVGYL) traverse the membrane as a helical segment. Topologically, residues 26 to 34 (YASLEGSEE) are cytoplasmic. The helical transmembrane segment at 35 to 56 (RSILAALALIPGFAGISYVAMA) threads the bilayer. Residues 57-70 (FGIGTVTIGETTLV) are Extracellular-facing. Residues 71-92 (GFRYLDWVVTTPLLVGFVGYAA) form a helical membrane-spanning segment. The Cytoplasmic segment spans residues 93 to 95 (GAS). A helical membrane pass occupies residues 96–118 (RRAIFGVMVADALMILTGVGAVV). Residues 119–122 (ADGT) are Extracellular-facing. The chain crosses the membrane as a helical span at residues 123-150 (LKWVLFGVSTVFHVSLFAYLYLVFPRSV). Over 151 to 153 (PDD) the chain is Cytoplasmic. Residues 154–181 (PQRIGLFSLLKNHIGLLWIAYPLVWLAG) form a helical membrane-spanning segment. The Extracellular segment spans residues 182–189 (PEGLGLAT). A helical transmembrane segment spans residues 190-222 (YVGVSITYAFLDLLAKVPYVYFFYARRQVFATK). N6-(retinylidene)lysine is present on K205. The Cytoplasmic portion of the chain corresponds to 223–236 (LLRDSGEVTATPAD).

This sequence belongs to the archaeal/bacterial/fungal opsin family.

The protein resides in the cell membrane. The chain is Bacterial rhodopsin CSR3 from Haloarcula vallismortis (Halobacterium vallismortis).